A 244-amino-acid chain; its full sequence is 1-(5-phosphoribosyl)-5-[(5-phosphoribosylamino)methylideneamino] imidazole-4-carboxamide isomerase (244 aa).

The active-site Proton acceptor is the aspartate 10. Aspartate 129 (proton donor) is an active-site residue.

Belongs to the HisA/HisF family.

The protein resides in the cytoplasm. It catalyses the reaction 1-(5-phospho-beta-D-ribosyl)-5-[(5-phospho-beta-D-ribosylamino)methylideneamino]imidazole-4-carboxamide = 5-[(5-phospho-1-deoxy-D-ribulos-1-ylimino)methylamino]-1-(5-phospho-beta-D-ribosyl)imidazole-4-carboxamide. It functions in the pathway amino-acid biosynthesis; L-histidine biosynthesis; L-histidine from 5-phospho-alpha-D-ribose 1-diphosphate: step 4/9. The chain is 1-(5-phosphoribosyl)-5-[(5-phosphoribosylamino)methylideneamino] imidazole-4-carboxamide isomerase from Rhodococcus opacus (strain B4).